Reading from the N-terminus, the 218-residue chain is Large ribosomal subunit protein uL3 (218 aa).

Residues 126-170 (HGFSRGPMSHGSKNHREPGSTGAGTTPGRIYPGKRMAGRYGGKKR) are disordered.

The protein belongs to the universal ribosomal protein uL3 family. Part of the 50S ribosomal subunit. Forms a cluster with proteins L14 and L19.

Functionally, one of the primary rRNA binding proteins, it binds directly near the 3'-end of the 23S rRNA, where it nucleates assembly of the 50S subunit. The sequence is that of Large ribosomal subunit protein uL3 from Prochlorococcus marinus (strain MIT 9313).